The primary structure comprises 555 residues: E3 ubiquitin-protein ligase ARIH1 (555 aa).

Positions 1–47 are enriched in acidic residues; it reads MDSDEGYNYEFDEDEECSEEDSGAEEEEDEDDDEPDDDNLDLGEVEL. Residues 1–93 form a disordered region; the sequence is MDSDEGYNYE…GGGGGPGHEQ (93 aa). Gly residues predominate over residues 65–90; it reads ETGGGGGSALGPGGGGGGGGGGGGPG. A UBA-like region spans residues 103–151; the sequence is TAEQILQHMVECIREVNEVIQNPATITRILLSHFNWDKEKLMERYFDGN. N6-acetyllysine is present on Lys-140. Residues 180 to 391 are TRIAD supradomain; the sequence is QDMPCQICYL…SAWYNCNRYN (212 aa). Cys-184, Cys-187, Cys-201, His-203, Cys-206, Cys-209, Cys-229, Cys-234, Cys-274, Cys-279, Cys-295, Cys-297, Cys-302, Cys-305, His-310, Cys-315, Cys-342, and Cys-345 together coordinate Zn(2+). The segment at 184–234 adopts an RING-type 1 zinc-finger fold; that stretch reads CQICYLNYPNSYFTGLECGHKFCMQCWSEYLTTKIMEEGMGQTISCPAHGC. An IBR-type zinc finger spans residues 254-315; sequence LKYQHLITNS…GENWHDPVKC (62 aa). The RING-type 2; atypical zinc-finger motif lies at 342–373; the sequence is CPKCHVTIEKDGGCNHMVCRNQNCKAEFCWVC. Cys-355 is a catalytic residue. Residues Cys-360, Cys-365, Cys-370, Cys-373, His-380, and Cys-387 each coordinate Zn(2+). Residues 406–555 are ariadne domain; the sequence is RAALQRYLFY…EKDLWEYIED (150 aa).

It belongs to the RBR family. Ariadne subfamily. As to quaternary structure, interacts (via the first RING-type zinc finger) with UBE2L3. Associates with cullin-RING ubiquitin ligase (CRL) complexes containing CUL1, CUL2 and CUL3. Interacts with neddylated CUL1. Interacts with neddylated CUL2. Interacts with neddylated CUL3. Interacts with neddylated CUL4A.

The protein localises to the cytoplasm. It localises to the nucleus. The protein resides in the cajal body. It catalyses the reaction [E2 ubiquitin-conjugating enzyme]-S-ubiquitinyl-L-cysteine + [acceptor protein]-L-lysine = [E2 ubiquitin-conjugating enzyme]-L-cysteine + [acceptor protein]-N(6)-ubiquitinyl-L-lysine.. The protein operates within protein modification; protein ubiquitination. Its activity is regulated as follows. Autoinhibited by the ariadne domain, which masks the second RING-type zinc finger that contains the active site and inhibits the E3 activity. Inhibition is relieved upon binding to neddylated cullin-RING ubiquitin ligase complexes, which activate the E3 ligase activity of ARIH1. In terms of biological role, E3 ubiquitin-protein ligase, which catalyzes ubiquitination of target proteins together with ubiquitin-conjugating enzyme E2 UBE2L3. Acts as an atypical E3 ubiquitin-protein ligase by working together with cullin-RING ubiquitin ligase (CRL) complexes and initiating ubiquitination of CRL substrates: associates with CRL complexes and specifically mediates addition of the first ubiquitin on CRLs targets. The initial ubiquitin is then elongated by CDC34/UBE2R1 and UBE2R2. E3 ubiquitin-protein ligase activity is activated upon binding to neddylated cullin-RING ubiquitin ligase complexes. Plays a role in protein translation in response to DNA damage by mediating ubiquitination of EIF4E2, the consequences of EIF4E2 ubiquitination are however unclear. According to a report, EIF4E2 ubiquitination leads to promote EIF4E2 cap-binding and protein translation arrest. According to another report EIF4E2 ubiquitination leads to its subsequent degradation. Acts as the ligase involved in ISGylation of EIF4E2. In vitro, controls the degradation of the LINC (LInker of Nucleoskeleton and Cytoskeleton) complex member SUN2 and may therefore have a role in the formation and localization of the LINC complex, and as a consequence, may act in nuclear subcellular localization and nuclear morphology. The chain is E3 ubiquitin-protein ligase ARIH1 (ARIH1) from Bos taurus (Bovine).